Consider the following 234-residue polypeptide: Ribosome maturation protein SDO1 homolog (234 aa).

It belongs to the SDO1/SBDS family.

The sequence is that of Ribosome maturation protein SDO1 homolog from Archaeoglobus fulgidus (strain ATCC 49558 / DSM 4304 / JCM 9628 / NBRC 100126 / VC-16).